A 130-amino-acid chain; its full sequence is Guanylate kinase (130 aa).

Residues 1–130 (KIFEDPTTSY…EKIQSRVNEA (130 aa)) enclose the Guanylate kinase-like domain.

Belongs to the guanylate kinase family.

It is found in the cytoplasm. The catalysed reaction is GMP + ATP = GDP + ADP. In terms of biological role, essential for recycling GMP and indirectly, cGMP. In Staphylococcus epidermidis, this protein is Guanylate kinase (gmk).